Here is a 175-residue protein sequence, read N- to C-terminus: MVSLKDSHFELFHLPAQFALDEPTLDAAYRAVQSQVHPDRFAAAGDAQKRVAMQWATRANEAYQTLRDPLKRATYLLHLRGVDVGAENNTAMEPAFLMQQMEWRERIEDAAAAKNVGELDALLDELRDERRARLAKLGSLLDSGSDQGAAEAVRQLMFVERVSAEIGAQIERLEH.

The J domain occupies 7-79; it reads SHFELFHLPA…LKRATYLLHL (73 aa).

The protein belongs to the HscB family. As to quaternary structure, interacts with HscA and stimulates its ATPase activity.

Its function is as follows. Co-chaperone involved in the maturation of iron-sulfur cluster-containing proteins. Seems to help targeting proteins to be folded toward HscA. This is Co-chaperone protein HscB homolog from Burkholderia thailandensis (strain ATCC 700388 / DSM 13276 / CCUG 48851 / CIP 106301 / E264).